The primary structure comprises 264 residues: 4-oxalocrotonate decarboxylase (264 aa).

This sequence belongs to the hydratase/decarboxylase family.

The enzyme catalyses (3E)-2-oxohex-3-enedioate + H(+) = 2-oxopent-4-enoate + CO2. It participates in xenobiotic degradation; toluene degradation. The polypeptide is 4-oxalocrotonate decarboxylase (xylI) (Pseudomonas putida (Arthrobacter siderocapsulatus)).